An 840-amino-acid chain; its full sequence is MGLFDKIFGSYSDREVKRITPIVDKIDSLGPEMEKLSDEELKQKTFEFKDRYAKGESLDDMLPEAFAVCREASTRVLGMKHYREQLIGGIVLHQGRIAEMKTGEGKTLVATLPVYLNAIAGKGVHVITVNDYLATRDKEWMGQLYEFLGLTTGVIVHGLTNDQRREAYNADITYGTNNEFGFDYLRDNMVIYKEERVQRPLHYCIVDEVDSILIDEARTPLIISGAGSKSTDLYKIADFFVKKLREEEDYTIDEKAHAAMLTDKGVAEAEKAFGIENYADANNMELQHHITQALKANYVMKRDKDYMVKDDEIAIVDEFTGRLMEGRRYSDGLHQAIEAKEGVKVQRESKTLATITFQNYFRMYTKLAGMTGTALTEETEFREIYGLDVVVIPTHRPVQRQDHSDLVFKTAKGKYDAIVEEIIETHKTGQPVLVGTTSIEKSEYLSSLLKKKGVPHKVLNARYHEQEAEIVSHAGELGNITIATNMAGRGTDIKLGEGVLEVGGLKIIGTERHESRRIDNQLRGRSGRQGDKGHSRFYISLEDDLMRIFGSEKLQSVVDRLGLEETEAIESKMVTKSIENAQKKVEGNNFDIRKTLLGYDDVMNKQREVIYKQRSQVLEGENLEDSVQAMIEDVITNAVQAHLGNIDEDDFEKELGDLIKYLEDIMLPHGKFTVEELKTNSNEEITRKFIECAREIYKEKEEFVGSEQMREIERVIILRVVDTKWMDHIDDMDHLKQGIGLRAYKQQDPIQAYQMEGSAMFDEMINNIKIDTVRYLFHVKVEAEKPQRERVAKETGASHGGDSQEIKKKPVKKEPKVGRNDLCPCGSGKKYKSCCGREVV.

ATP contacts are provided by residues Gln-85, 103–107 (GEGKT), and Asp-492. Residues 787 to 821 (QRERVAKETGASHGGDSQEIKKKPVKKEPKVGRND) form a disordered region. The segment covering 802–819 (DSQEIKKKPVKKEPKVGR) has biased composition (basic and acidic residues). Positions 823, 825, 834, and 835 each coordinate Zn(2+).

The protein belongs to the SecA family. In terms of assembly, monomer and homodimer. Part of the essential Sec protein translocation apparatus which comprises SecA, SecYEG and auxiliary proteins SecDF. Other proteins may also be involved. Requires Zn(2+) as cofactor.

The protein localises to the cell membrane. The protein resides in the cytoplasm. It catalyses the reaction ATP + H2O + cellular proteinSide 1 = ADP + phosphate + cellular proteinSide 2.. Part of the Sec protein translocase complex. Interacts with the SecYEG preprotein conducting channel. Has a central role in coupling the hydrolysis of ATP to the transfer of proteins into and across the cell membrane, serving as an ATP-driven molecular motor driving the stepwise translocation of polypeptide chains across the membrane. The polypeptide is Protein translocase subunit SecA (Clostridium perfringens (strain 13 / Type A)).